The chain runs to 443 residues: Two-pore potassium channel 2 (443 aa).

The Cytoplasmic portion of the chain corresponds to 1-144; the sequence is MANDGNGDNN…KTDQQSDSKT (144 aa). The tract at residues 67-109 is disordered; it reads SLPIDALSQNPSTSSSATTSFSDSTDLLLPLTEPNKPVRKSKP. The segment covering 72–98 has biased composition (low complexity); that stretch reads ALSQNPSTSSSATTSFSDSTDLLLPLT. The chain crosses the membrane as a helical span at residues 145–165; the sequence is IVNQAVALLVVYLSLGVLIYW. Residues 181-200 constitute an intramembrane region (pore-forming); the sequence is DALYFCIVTMCTIGYGDITP. The helical transmembrane segment at 208–228 threads the bilayer; sequence FSIFFVLVGFGFMDILLSGMV. Topologically, residues 229–274 are cytoplasmic; the sequence is TYVLDLQENYMLETARNESLNLNDRDKVRSYIIDVKKGRMRIRLKV. The chain crosses the membrane as a helical span at residues 275-295; it reads GLALGVVVLCLGFGVLIMHFV. Positions 302-321 form an intramembrane region, pore-forming; the sequence is DSFYFSVMSVTTVGYGDRAF. Residues 328 to 348 traverse the membrane as a helical segment; that stretch reads LLAAMWLLVSTLAVARAILFL. The Cytoplasmic segment spans residues 349–443; it reads AESRVDKRNR…TKDLPTATSI (95 aa). 2 EF-hand domains span residues 365–400 and 404–439; these read LGES…KMDK and KDIN…DLPT. Positions 378, 380, 382, 384, 389, 417, 421, 423, and 428 each coordinate Ca(2+).

This sequence belongs to the two pore domain potassium channel (TC 1.A.1.7) family. In terms of assembly, homodimer. Expressed in roots, stems, leaves and flowers.

The protein localises to the vacuole membrane. Functionally, probable voltage-independent potassium-selective tonoplast ion channel. This is Two-pore potassium channel 2 (TPK2) from Arabidopsis thaliana (Mouse-ear cress).